A 501-amino-acid polypeptide reads, in one-letter code: Amidophosphoribosyltransferase (501 aa).

The active-site Nucleophile is Cys2. Residues 2 to 234 form the Glutamine amidotransferase type-2 domain; the sequence is CGIVGIVGKS…PGEAVYITEE (233 aa). Residues Thr303, Asp365, and Asp366 each coordinate Mg(2+).

This sequence in the C-terminal section; belongs to the purine/pyrimidine phosphoribosyltransferase family. Mg(2+) serves as cofactor.

It carries out the reaction 5-phospho-beta-D-ribosylamine + L-glutamate + diphosphate = 5-phospho-alpha-D-ribose 1-diphosphate + L-glutamine + H2O. It participates in purine metabolism; IMP biosynthesis via de novo pathway; N(1)-(5-phospho-D-ribosyl)glycinamide from 5-phospho-alpha-D-ribose 1-diphosphate: step 1/2. In terms of biological role, catalyzes the formation of phosphoribosylamine from phosphoribosylpyrophosphate (PRPP) and glutamine. This Pseudomonas aeruginosa (strain ATCC 15692 / DSM 22644 / CIP 104116 / JCM 14847 / LMG 12228 / 1C / PRS 101 / PAO1) protein is Amidophosphoribosyltransferase.